We begin with the raw amino-acid sequence, 499 residues long: Glucooligosaccharide oxidase (499 aa).

Residues methionine 1–arginine 25 form the signal peptide. The cysteines at positions 31 and 80 are disulfide-linked. Residues valine 58–alanine 230 form the FAD-binding PCMH-type domain. Positions histidine 95–cysteine 155 form a cross-link, 6-(S-cysteinyl)-8alpha-(pros-histidyl)-FAD (His-Cys). Substrate-binding residues include tyrosine 97, threonine 154, and arginine 270. 2 N-linked (GlcNAc...) asparagine glycosylation sites follow: asparagine 330 and asparagine 366. Substrate is bound by residues glutamine 378 and glutamine 409. Asparagine 419 carries an N-linked (GlcNAc...) asparagine glycan. Tyrosine 454 is a binding site for substrate. The Proton acceptor role is filled by tyrosine 454.

Belongs to the oxygen-dependent FAD-linked oxidoreductase family. It depends on FAD as a cofactor. Post-translationally, the FAD cofactor is bound via a bicovalent 6-S-cysteinyl, 8alpha-N1-histidyl FAD linkage.

It localises to the secreted. It catalyses the reaction beta-lactose + O2 = lactobiono-1,5-lactone + H2O2. The enzyme catalyses D-cellobiose + O2 = D-cellobiono-1,5-lactone + H2O2. The catalysed reaction is D-cellotriose + O2 = D-cellotriono-1,5-lactone + H2O2. It carries out the reaction D-cellotetraose + O2 = D-cellotetraono-1,5-lactone + H2O2. It catalyses the reaction D-cellopentaose + O2 = D-cellopentaono-1,5-lactone + H2O2. The enzyme catalyses D-cellohexaose + O2 = D-cellohexaono-1,5-lactone + H2O2. Catalyzes the selective oxidation of C1 hydroxyl moieties on mono- and disaccharides with concomitant reduction of molecular oxygen to hydrogen peroxide. This results in the formation of the corresponding lactones, which typically undergo spontaneous hydrolysis. Glucooligosaccharide oxidase is able to oxidize the monosaccharide D-glucose as well as the disaccharides maltose, cellobiose, and lactose. In addition, it shows high selectivity for cello- and maltooligosaccharides, indicating that glucooligosaccharide oxidase prefers oligosaccharides with a beta-D-glucosyl unit on the reducing end and additional sugar units linked by alpha- or beta-1,4 glucosidic bonds. This chain is Glucooligosaccharide oxidase (gluO), found in Sarocladium strictum (Black bundle disease fungus).